The chain runs to 143 residues: Ribosome-binding factor A (143 aa).

Residues 1–20 are disordered; that stretch reads MRFMGKNKFHTGPGPSQRQL.

Belongs to the RbfA family. As to quaternary structure, monomer. Binds 30S ribosomal subunits, but not 50S ribosomal subunits or 70S ribosomes.

The protein resides in the cytoplasm. Functionally, one of several proteins that assist in the late maturation steps of the functional core of the 30S ribosomal subunit. Associates with free 30S ribosomal subunits (but not with 30S subunits that are part of 70S ribosomes or polysomes). Required for efficient processing of 16S rRNA. May interact with the 5'-terminal helix region of 16S rRNA. The sequence is that of Ribosome-binding factor A from Roseobacter denitrificans (strain ATCC 33942 / OCh 114) (Erythrobacter sp. (strain OCh 114)).